The following is a 460-amino-acid chain: MNTSHKTLKTIAILGQPNVGKSSLFNRLARERIAITSDFAGTTRDINKRKIALNGHEVELLDTGGMAKDALLSKEIKALNLKAAQMSDLILYVVDGKSIPSDEDIKLFREVFKTNPNCFLVINKIDNDKEKERAYAFSSFGMPKSFNISVSHNRGISALIDAVLNALSLNQIIEQDLDADILESLENNAPEEETKEEIIQVGIIGRVNVGKSSLLNALTKKERSLVSSVAGTTIDPIDETILIGDQKICFVDTAGIRHRGKILGIEKYALERTQKALEKSHIALLVLDVSAPFVELDEKISSLADKHSLGIILILNKWDIRYAPYEEIMATLKRKFRFLEYAPVITTSCLKARHIDEIKHKIIEVYECFSRRIPTSLLNSVITQATQKHPLPSDGGKLVKVYYATQFATKPPQISLIMNRPKALHFSYKRYLINTLRKEFNFLGTPLILNAKDKKSAQQN.

2 EngA-type G domains span residues 9–171 and 199–370; these read KTIA…SLNQ and IQVG…ECFS. GTP-binding positions include 15–22, 62–66, 123–126, 205–212, 252–256, and 316–319; these read GQPNVGKS, DTGGM, NKID, GRVNVGKS, DTAGI, and NKWD. A KH-like domain is found at 371 to 455; sequence RRIPTSLLNS…PLILNAKDKK (85 aa).

This sequence belongs to the TRAFAC class TrmE-Era-EngA-EngB-Septin-like GTPase superfamily. EngA (Der) GTPase family. As to quaternary structure, associates with the 50S ribosomal subunit.

In terms of biological role, GTPase that plays an essential role in the late steps of ribosome biogenesis. The polypeptide is GTPase Der (Helicobacter pylori (strain G27)).